A 357-amino-acid chain; its full sequence is Dynein axonemal assembly factor 10 (357 aa).

WD repeat units follow at residues 63 to 105 (EKAK…VPVY), 115 to 154 (NTID…DPVA), 162 to 205 (ENKR…LRWE), 207 to 249 (NIKN…PTKG), 257 to 297 (AHKS…QRSK), and 319 to 357 (LSTQ…LHKI).

As to quaternary structure, component of the PAQosome complex which is responsible for the biogenesis of several protein complexes and which consists of R2TP complex members RUVBL1, RUVBL2, RPAP3 and PIH1D1, URI complex members PFDN2, PFDN6, PDRG1, UXT and URI1 as well as ASDURF, POLR2E and DNAAF10/WDR92. Interacts with PIH1D1; the interaction associates DNAAF10 with the R2TP complex. Interacts with several dynein axonemal assembly factors.

The protein localises to the dynein axonemal particle. Its function is as follows. Key assembly factor specifically required for the stability of axonemal dynein heavy chains in cytoplasm. This Bos taurus (Bovine) protein is Dynein axonemal assembly factor 10 (DNAAF10).